Reading from the N-terminus, the 252-residue chain is 2-succinyl-6-hydroxy-2,4-cyclohexadiene-1-carboxylate synthase (252 aa).

The protein belongs to the AB hydrolase superfamily. MenH family. In terms of assembly, monomer.

The catalysed reaction is 5-enolpyruvoyl-6-hydroxy-2-succinyl-cyclohex-3-ene-1-carboxylate = (1R,6R)-6-hydroxy-2-succinyl-cyclohexa-2,4-diene-1-carboxylate + pyruvate. It functions in the pathway quinol/quinone metabolism; 1,4-dihydroxy-2-naphthoate biosynthesis; 1,4-dihydroxy-2-naphthoate from chorismate: step 3/7. Its pathway is quinol/quinone metabolism; menaquinone biosynthesis. In terms of biological role, catalyzes a proton abstraction reaction that results in 2,5-elimination of pyruvate from 2-succinyl-5-enolpyruvyl-6-hydroxy-3-cyclohexene-1-carboxylate (SEPHCHC) and the formation of 2-succinyl-6-hydroxy-2,4-cyclohexadiene-1-carboxylate (SHCHC). The sequence is that of 2-succinyl-6-hydroxy-2,4-cyclohexadiene-1-carboxylate synthase from Escherichia coli O8 (strain IAI1).